We begin with the raw amino-acid sequence, 335 residues long: Serpentine receptor class XA 10 (335 aa).

Residues 1-10 (MDVDAAVVKR) lie on the Extracellular side of the membrane. The helical transmembrane segment at 11 to 31 (IALWVYETCSVFNLFYCITLS) threads the bilayer. The Cytoplasmic segment spans residues 32–46 (LAIKTSKNNALPATY). Residues 47 to 67 (IYNMAISNALLVIFGIMVYIL) form a helical membrane-spanning segment. The Extracellular segment spans residues 68-82 (PYYMSDKTYKTYRDS). Residues 83–103 (IGAMISVGVTFNYLHPMLTLI) form a helical membrane-spanning segment. Residues 104–126 (LMTINRIAVVVSMQASQLFTSSK) lie on the Cytoplasmic side of the membrane. A helical transmembrane segment spans residues 127 to 147 (IWLYTSFHMTANFACLIIPYL). Residues 148-177 (SECRINYDIRKVGFISECAPDRHQITTFSN) lie on the Extracellular side of the membrane. Residues 178–198 (YYSVFFPFVAFFFNVLVIINF) traverse the membrane as a helical segment. The Cytoplasmic portion of the chain corresponds to 199–238 (KLQRSPTYTKIKNMFRRGNGDQFTSMPSDVLKAKKKTERM). A helical membrane pass occupies residues 239-259 (LMIQAFITAFYLSVYELTSLV). The Extracellular portion of the chain corresponds to 260 to 276 (LRVVPELFGNLSLDGKL). Residues 277–297 (AFTYFRLAQVPCHVFLVYFIF) form a helical membrane-spanning segment. Topologically, residues 298–319 (TPVTRKIYMDFVRERVFCMKPA) are cytoplasmic.

Belongs to the nematode receptor-like protein srxa family.

It localises to the membrane. This is Serpentine receptor class XA 10 (srxa-10) from Caenorhabditis elegans.